Consider the following 169-residue polypeptide: MLASRALSLIGKRAISTSVCLRAHGSVVKSEDYAFPTYADRRDYPLPDVAHVTMLSASQKALKEKEKADWSSLSRDEKVQLYRIQFNESFAEMNRGTNEWKTVVGMAMFFIGFTALVLIWEKSYVYGPIPHTFDRDWVAMQTKRMLDMKANPIQGFSAKWDYDKNEWKK.

Residues methionine 1–arginine 22 constitute a mitochondrion transit peptide. At alanine 23–glutamate 99 the chain is on the mitochondrial matrix side. N6-acetyllysine; alternate is present on lysine 29. Residue lysine 29 is modified to N6-succinyllysine; alternate. 2 positions are modified to phosphoserine: serine 56 and serine 58. Residue lysine 60 is modified to N6-acetyllysine; alternate. The residue at position 60 (lysine 60) is an N6-succinyllysine; alternate. The residue at position 67 (lysine 67) is an N6-acetyllysine. The helical transmembrane segment at tryptophan 100–valine 125 threads the bilayer. At tyrosine 126–lysine 169 the chain is on the mitochondrial intermembrane side.

Belongs to the cytochrome c oxidase IV family. In terms of assembly, component of the cytochrome c oxidase (complex IV, CIV), a multisubunit enzyme composed of 14 subunits. The complex is composed of a catalytic core of 3 subunits MT-CO1, MT-CO2 and MT-CO3, encoded in the mitochondrial DNA, and 11 supernumerary subunits COX4I, COX5A, COX5B, COX6A, COX6B, COX6C, COX7A, COX7B, COX7C, COX8 and NDUFA4, which are encoded in the nuclear genome. The complex exists as a monomer or a dimer and forms supercomplexes (SCs) in the inner mitochondrial membrane with NADH-ubiquinone oxidoreductase (complex I, CI) and ubiquinol-cytochrome c oxidoreductase (cytochrome b-c1 complex, complex III, CIII), resulting in different assemblies (supercomplex SCI(1)III(2)IV(1) and megacomplex MCI(2)III(2)IV(2)). Interacts with PHB2; the interaction decreases in absence of SPHK2. Interacts with AFG1L. Interacts with ABCB7; this interaction allows the regulation of cellular iron homeostasis and cellular reactive oxygen species (ROS) levels in cardiomyocytes. Interacts with FLVCR2; this interaction occurs in the absence of heme and is disrupted upon heme binding. Interacts with IRGC.

The protein localises to the mitochondrion inner membrane. Its pathway is energy metabolism; oxidative phosphorylation. Its function is as follows. Component of the cytochrome c oxidase, the last enzyme in the mitochondrial electron transport chain which drives oxidative phosphorylation. The respiratory chain contains 3 multisubunit complexes succinate dehydrogenase (complex II, CII), ubiquinol-cytochrome c oxidoreductase (cytochrome b-c1 complex, complex III, CIII) and cytochrome c oxidase (complex IV, CIV), that cooperate to transfer electrons derived from NADH and succinate to molecular oxygen, creating an electrochemical gradient over the inner membrane that drives transmembrane transport and the ATP synthase. Cytochrome c oxidase is the component of the respiratory chain that catalyzes the reduction of oxygen to water. Electrons originating from reduced cytochrome c in the intermembrane space (IMS) are transferred via the dinuclear copper A center (CU(A)) of subunit 2 and heme A of subunit 1 to the active site in subunit 1, a binuclear center (BNC) formed by heme A3 and copper B (CU(B)). The BNC reduces molecular oxygen to 2 water molecules using 4 electrons from cytochrome c in the IMS and 4 protons from the mitochondrial matrix. The protein is Cytochrome c oxidase subunit 4 isoform 1, mitochondrial (Cox4i1) of Mus musculus (Mouse).